A 118-amino-acid polypeptide reads, in one-letter code: Putative pterin-4-alpha-carbinolamine dehydratase (118 aa).

It belongs to the pterin-4-alpha-carbinolamine dehydratase family.

It catalyses the reaction (4aS,6R)-4a-hydroxy-L-erythro-5,6,7,8-tetrahydrobiopterin = (6R)-L-erythro-6,7-dihydrobiopterin + H2O. The protein is Putative pterin-4-alpha-carbinolamine dehydratase of Stutzerimonas stutzeri (strain A1501) (Pseudomonas stutzeri).